A 92-amino-acid polypeptide reads, in one-letter code: Nodulation protein F (92 aa).

The region spanning Q4 to I88 is the Carrier domain. The residue at position 45 (S45) is an O-(pantetheine 4'-phosphoryl)serine.

Post-translationally, 4'-phosphopantetheine is transferred from CoA to a specific serine of apo-NodF.

Functionally, proposed to synthesize nod factor fatty acyl chain. Involved in trans-2,trans-4,trans-6,cis-11-octadecatetraenoic acid biosynthesis. This chain is Nodulation protein F (nodF), found in Rhizobium leguminosarum bv. trifolii.